The primary structure comprises 567 residues: Vacuolar fusion protein MON1 homolog (567 aa).

2 disordered regions span residues 1 to 52 (MDMD…DDEG) and 65 to 129 (TSAS…DDTS). Residues 7 to 19 (TNNPSPPGPPDSP) show a composition bias toward pro residues. The span at 43-52 (DDYDDDDDEG) shows a compositional bias: acidic residues.

This sequence belongs to the MON1/SAND family. In terms of assembly, interacts with CCZ1A, CCZ1B and RABF2B.

It localises to the endosome. The protein localises to the prevacuolar compartment. Functionally, plays an important role in membrane trafficking through the secretory apparatus. In complex with CCZ1, acts as a guanine exchange factor (GEF) for Rab7 protein family. Promotes the exchange of GDP to GTP, converting it from an inactive GDP-bound form into an active GTP-bound form. The active form is involved in protein trafficking from prevacuolar compartments (PVCs) to vacuoles. May serve as a linker between Rab5 and Rab7 protein families in PVCs and mediate PVC maturation. The protein is Vacuolar fusion protein MON1 homolog of Oryza sativa subsp. japonica (Rice).